A 393-amino-acid chain; its full sequence is Cytochrome b (393 aa).

Helical transmembrane passes span 32-52, 76-98, 113-133, and 179-199; these read FGSL…TLAM, WLIR…LHMG, VWTL…LGYV, and FFAL…MHLI. Residues H82 and H96 each coordinate heme b. Positions 183 and 197 each coordinate heme b. Residue H202 coordinates a ubiquinone. 4 consecutive transmembrane segments (helical) span residues 226–246, 290–310, 322–342, and 349–369; these read FIFK…IFVF, LLGV…PFTD, LSKI…KLGA, and FIEF…IIVP.

This sequence belongs to the cytochrome b family. As to quaternary structure, fungal cytochrome b-c1 complex contains 10 subunits; 3 respiratory subunits, 2 core proteins and 5 low-molecular weight proteins. Cytochrome b-c1 complex is a homodimer. The cofactor is heme b.

Its subcellular location is the mitochondrion inner membrane. Its function is as follows. Component of the ubiquinol-cytochrome c reductase complex (complex III or cytochrome b-c1 complex) that is part of the mitochondrial respiratory chain. The b-c1 complex mediates electron transfer from ubiquinol to cytochrome c. Contributes to the generation of a proton gradient across the mitochondrial membrane that is then used for ATP synthesis. This is Cytochrome b (COB) from Venturia inaequalis (Apple scab fungus).